Here is a 109-residue protein sequence, read N- to C-terminus: uncharacterized protein (109 aa).

This is an uncharacterized protein from Enterobacteriaceae (Bacteriophage P2).